Consider the following 554-residue polypeptide: Malate synthase 1 (554 aa).

Arg177 acts as the Proton acceptor in catalysis. The active-site Proton donor is Asp457. The short motif at 552 to 554 is the SKL peroxisome targeting motif element; it reads SKL.

This sequence belongs to the malate synthase family. As to quaternary structure, interacts with PEX9.

The protein resides in the peroxisome matrix. The catalysed reaction is glyoxylate + acetyl-CoA + H2O = (S)-malate + CoA + H(+). The protein operates within carbohydrate metabolism; glyoxylate cycle; (S)-malate from isocitrate: step 2/2. In terms of biological role, malate synthase which takes part in the glyoxylate cycle. MLS1 activity is essential for cells to grow on oleic acid as a sole carbon source. Two steps of the glyoxylate cycle take place in the cytosol, the splitting of isocitrate into succinate and glyoxylate, and the dehydrogenation of malate to oxaloacetate. However, the formation of malate from glyoxylate and acetyl-CoA undertaken MLS1, occurs in the peroxisomes when cells are grown on oleic acid. The source of acetyl-CoA being either peroxisomal when breaking down fatty acids, or cytosolic when extra-cellular two-carbon substrates are used, therefore, although not strictly essential, the peroxisomal localization of MLS1 appears to be advantageous for cells growing on oleic acid, in that acetyl-CoA production and utilization are thereby intimately compartmentalized together to increase efficiency. The chain is Malate synthase 1 from Saccharomyces cerevisiae (strain ATCC 204508 / S288c) (Baker's yeast).